The sequence spans 662 residues: UvrABC system protein B (662 aa).

In terms of domain architecture, Helicase ATP-binding spans 31-188 (DNIEGGEKAQ…NDLVDIQFER (158 aa)). 44–51 (GATGTGKT) lines the ATP pocket. The Beta-hairpin signature appears at 97-120 (YYDYYQPEAYVPSSDTYIEKDSSV). Residues 435–601 (QIDDLLGEIN…TIKKEIRDLI (167 aa)) form the Helicase C-terminal domain. The UVR domain occupies 626–661 (KELVKKLEKQMQEAVEVLDFELAAQIRDMMLEVKAL).

The protein belongs to the UvrB family. As to quaternary structure, forms a heterotetramer with UvrA during the search for lesions. Interacts with UvrC in an incision complex.

Its subcellular location is the cytoplasm. In terms of biological role, the UvrABC repair system catalyzes the recognition and processing of DNA lesions. A damage recognition complex composed of 2 UvrA and 2 UvrB subunits scans DNA for abnormalities. Upon binding of the UvrA(2)B(2) complex to a putative damaged site, the DNA wraps around one UvrB monomer. DNA wrap is dependent on ATP binding by UvrB and probably causes local melting of the DNA helix, facilitating insertion of UvrB beta-hairpin between the DNA strands. Then UvrB probes one DNA strand for the presence of a lesion. If a lesion is found the UvrA subunits dissociate and the UvrB-DNA preincision complex is formed. This complex is subsequently bound by UvrC and the second UvrB is released. If no lesion is found, the DNA wraps around the other UvrB subunit that will check the other stand for damage. The protein is UvrABC system protein B of Streptococcus pneumoniae serotype 2 (strain D39 / NCTC 7466).